The sequence spans 409 residues: Toluene 1,2-dioxygenase system ferredoxin--NAD(+) reductase component (409 aa).

4 to 35 (HVAIIGNGVGGFTTAQALRAEGFEGRISLIGD) contacts FAD. NAD(+) is bound at residue 145 to 173 (RLLIVGGGLIGCEVATTARKLGLSVTILE).

It belongs to the bacterial ring-hydroxylating dioxygenase ferredoxin reductase family. As to quaternary structure, this dioxygenase system consists of four proteins: the two subunits of the hydroxylase component (todC1 and todC2), a ferredoxin (TodB) and a ferredoxin reductase (TodA). The cofactor is FAD.

It catalyses the reaction 2 reduced [2Fe-2S]-[ferredoxin] + NAD(+) + H(+) = 2 oxidized [2Fe-2S]-[ferredoxin] + NADH. Its pathway is xenobiotic degradation; toluene degradation. In terms of biological role, part of the electron transfer component of toluene 1,2-dioxygenase, transfers electrons from ferredoxin (TodB) to NADH. The chain is Toluene 1,2-dioxygenase system ferredoxin--NAD(+) reductase component (todA) from Pseudomonas putida (Arthrobacter siderocapsulatus).